The primary structure comprises 674 residues: Carcinine transporter (674 aa).

At 1–53 (MSDIEDNDGDEYDELSELRQRHKPESQPSVDEAFDLDDLLPTIGEFGKYQKLL) the chain is on the cytoplasmic side. Residues 54–74 (VFGICLPACIPCGFCAFNQLF) form a helical membrane-spanning segment. At 75–178 (MADTPDDYWC…DLVCDQDIYP (104 aa)) the chain is on the extracellular side. Asn-122, Asn-141, and Asn-156 each carry an N-linked (GlcNAc...) asparagine glycan. Residues 179-199 (TIGLAALNTGGPVGVYLFGLL) traverse the membrane as a helical segment. Topologically, residues 200–206 (NDRGGRR) are cytoplasmic. The helical transmembrane segment at 207-227 (LSYFVCLATLLAGSLMTSLSK) threads the bilayer. Residues 228–236 (DFWTWAGSR) are Extracellular-facing. The helical transmembrane segment at 237–257 (VIVGLTIPAVYQIPFIISLEL) threads the bilayer. The Cytoplasmic segment spans residues 258–264 (VGENYRS). A helical membrane pass occupies residues 265-285 (FVTVMTCTFYTSGIMLLSGVT). Topologically, residues 286–293 (YLERDWVR) are extracellular. The chain crosses the membrane as a helical span at residues 294–314 (LSYITSLPFYAYFLYMFVMPE). Residues 315–385 (SPRWLLMRGR…CRTPNMRLKT (71 aa)) lie on the Cytoplasmic side of the membrane. Residues 386-406 (ILITLSWFANETVYLGLSYYG) form a helical membrane-spanning segment. Over 407–414 (PALGTNQY) the chain is Extracellular. The chain crosses the membrane as a helical span at residues 415–435 (VSFFLSAVVELPSYLCCWYFM). The Cytoplasmic segment spans residues 436–441 (DTWGRR). Residues 442–462 (WPLSLSMILGGVACVITVMLP) traverse the membrane as a helical segment. Over 463–469 (DDAVDET) the chain is Extracellular. A helical membrane pass occupies residues 470–490 (LVLYLVSKALLSASFLIIYPF). Topologically, residues 491 to 500 (AGELYPTQVR) are cytoplasmic. The helical transmembrane segment at 501 to 521 (GIGIGASSYIGGLGLIGIPFI) threads the bilayer. Topologically, residues 522 to 527 (TYLGKD) are extracellular. The helical transmembrane segment at 528–548 (NLKLPLVIMGFLSMLGGMTGL) threads the bilayer. Residues 549–674 (RLPETLHHRL…DGTMQLTHWI (126 aa)) are Cytoplasmic-facing. Residues 614 to 631 (RDSRRVREPAPRIDERTP) are compositionally biased toward basic and acidic residues. A disordered region spans residues 614 to 647 (RDSRRVREPAPRIDERTPLDTTASGSGRPVHRPS).

The protein belongs to the major facilitator (TC 2.A.1) superfamily. Organic cation transporter (TC 2.A.1.19) family. In terms of tissue distribution, expressed in photoreceptor cells.

It is found in the cell membrane. Its subcellular location is the cell projection. The protein resides in the axon. Functionally, carcinine transporter which is required for recycling of the neurotransmitter histamine in photoreceptor neurons of the compound eye. Following histamine release from photoreceptors and its uptake by glia where it is converted to carcinine, required for the uptake of carcinine from glia into photoreceptor cells where it can be hydrolyzed by tan to form histamine and beta-alanine. The sequence is that of Carcinine transporter from Drosophila melanogaster (Fruit fly).